The chain runs to 581 residues: Ketol-acid reductoisomerase, chloroplastic (581 aa).

The N-terminal 50 residues, 1–50 (MAAVTSSCSTAISASSKTLAKPVAASFAPTNLSFSKLSPQSIRARRSITV), are a transit peptide targeting the chloroplast. Residues 92–290 (VRGGRDLFHL…ALGSPFTFAT (199 aa)) form the KARI N-terminal Rossmann domain. NADP(+)-binding positions include 113 to 120 (GVIGWGSQ), 146 to 151 (RKGSSS), and 185 to 189 (SDSAQ). His-210 is an active-site residue. KARI C-terminal knotted domains lie at 291–439 (TLEQ…RPAG) and 440–576 (DLGP…RPEL). Asp-299, Glu-303, Glu-476, and Glu-480 together coordinate Mg(2+). Ser-502 is a substrate binding site.

This sequence belongs to the ketol-acid reductoisomerase family. In terms of assembly, homodimer. The cofactor is Mg(2+).

The protein localises to the plastid. Its subcellular location is the chloroplast. The enzyme catalyses (2R)-2,3-dihydroxy-3-methylbutanoate + NADP(+) = (2S)-2-acetolactate + NADPH + H(+). It carries out the reaction (2R,3R)-2,3-dihydroxy-3-methylpentanoate + NADP(+) = (S)-2-ethyl-2-hydroxy-3-oxobutanoate + NADPH + H(+). It functions in the pathway amino-acid biosynthesis; L-isoleucine biosynthesis; L-isoleucine from 2-oxobutanoate: step 2/4. It participates in amino-acid biosynthesis; L-valine biosynthesis; L-valine from pyruvate: step 2/4. In Pisum sativum (Garden pea), this protein is Ketol-acid reductoisomerase, chloroplastic (PGAAIR).